The chain runs to 336 residues: HTH-type transcriptional regulator SyrM (336 aa).

The 58-residue stretch at 41–98 (IDLNLLVALEALLEYRNVTHAGQHIGRSQPAMSRALGRLRGLFNDDLLVRSSTGLIPT) folds into the HTH lysR-type domain. Positions 58–77 (VTHAGQHIGRSQPAMSRALG) form a DNA-binding region, H-T-H motif.

This sequence belongs to the LysR transcriptional regulatory family.

Acts in trans to stimulate nod gene expression via nodD3 and exo gene expression via SyrA. The sequence is that of HTH-type transcriptional regulator SyrM (syrM) from Rhizobium etli.